The chain runs to 176 residues: MDLKNLTQEERSELSLIDVAHFILEQRKETILFPELVKEIQAFLGLKDAEIRERLVQFYTDMNIDGNFISLGNNMWGLRAWYPMDAIDEEVQTQTTPKKKRKSDDDDDEEILDDDVDYDDEEIVEELGEEEITLADVLLDEDEDEDDHLPDGIEGDLATVEDDYTDGDYTEDPEDK.

In terms of domain architecture, HTH HARE-type spans Leu14–Trp81. 2 disordered regions span residues Val91–Asp119 and Asp140–Lys176. Acidic residues-rich tracts occupy residues Asp105–Asp119 and Thr159–Lys176.

The protein belongs to the RpoE family. In terms of assembly, RNAP is composed of a core of 2 alpha, a beta and a beta' subunits. The core is associated with a delta subunit and one of several sigma factors.

Its function is as follows. Participates in both the initiation and recycling phases of transcription. In the presence of the delta subunit, RNAP displays an increased specificity of transcription, a decreased affinity for nucleic acids, and an increased efficiency of RNA synthesis because of enhanced recycling. The sequence is that of Probable DNA-directed RNA polymerase subunit delta from Listeria welshimeri serovar 6b (strain ATCC 35897 / DSM 20650 / CCUG 15529 / CIP 8149 / NCTC 11857 / SLCC 5334 / V8).